The chain runs to 157 residues: MKLLKGLPVAKDVRVAIVGACFNAPIADRLVSGARETFFESGGSPDSLTVVRVPGAFEIPCAIKKMLSKGNLFQAIVACGVLIQGETSHYEHIADNVAAGIARLSVEFCLPITFSVITAPNVEAAWERAGIKGPNLGASGMRTALEMASLFSLIEKE.

5-amino-6-(D-ribitylamino)uracil-binding positions include Phe22, 56–58, and 81–83; these read AFE and VLI. A (2S)-2-hydroxy-3-oxobutyl phosphate-binding site is contributed by 86-87; the sequence is ET. Residue His89 is the Proton donor of the active site. 5-amino-6-(D-ribitylamino)uracil is bound at residue Phe114. Arg128 provides a ligand contact to (2S)-2-hydroxy-3-oxobutyl phosphate.

It belongs to the DMRL synthase family.

The enzyme catalyses (2S)-2-hydroxy-3-oxobutyl phosphate + 5-amino-6-(D-ribitylamino)uracil = 6,7-dimethyl-8-(1-D-ribityl)lumazine + phosphate + 2 H2O + H(+). It functions in the pathway cofactor biosynthesis; riboflavin biosynthesis; riboflavin from 2-hydroxy-3-oxobutyl phosphate and 5-amino-6-(D-ribitylamino)uracil: step 1/2. Functionally, catalyzes the formation of 6,7-dimethyl-8-ribityllumazine by condensation of 5-amino-6-(D-ribitylamino)uracil with 3,4-dihydroxy-2-butanone 4-phosphate. This is the penultimate step in the biosynthesis of riboflavin. In Chlamydia muridarum (strain MoPn / Nigg), this protein is 6,7-dimethyl-8-ribityllumazine synthase.